Here is a 486-residue protein sequence, read N- to C-terminus: MASNRFQNLQNWTNKHVFSNSLDYWNQELNEVPSYQNQPQTGESGSNPPPHDRLEPIQESVVSEQPQKDDINKQEEAKDDGHGEASEPISALQAAWNVTNAIQGMFIVGLPIAVKVGGWWSIGAMVGVAYVCYWTGVLLIECLYENGVKKRKTYREIADFYKPGFGKWVLAAQLTELLSTCIIYLVLAADLLQSCFPSVDKAGWMMITSASLLTCSFLDDLQIVSRLSFFNAISHLIVNLIMVLYCLSFVSQWSFSTITFSLNINTLPTIVGMVVFGYTSHIFLPNLEGNMKNPAQFNVMLKWSHIAAAVFKVVFGMLGFLTFGELTQEEISNSLPNQSFKILVNLILVVKALLSYPLPFYAAVQLLKNNLFLGYPQTPFTSCYSPDKSLREWAVTLRIILVLFTLFVALSVPYLVELMGLVGNITGTMLSFIWPALFHLYIKEKTLNNFEKRFDQGIIIMGCSVCISGVYFSSMELLRAINSADS.

Over methionine 1 to glutamine 93 the chain is Cytoplasmic. Residues leucine 29–serine 46 show a composition bias toward polar residues. The segment at leucine 29 to alanine 85 is disordered. Residues proline 66–alanine 85 are compositionally biased toward basic and acidic residues. A helical membrane pass occupies residues alanine 94 to valine 114. Topologically, residues lysine 115–tryptophan 119 are lumenal, vesicle. The helical transmembrane segment at tryptophan 120 to isoleucine 140 threads the bilayer. Over glutamate 141–lysine 167 the chain is Cytoplasmic. A helical transmembrane segment spans residues tryptophan 168 to alanine 188. The Lumenal, vesicle portion of the chain corresponds to alanine 189 to glycine 203. Residues tryptophan 204–valine 224 traverse the membrane as a helical segment. At serine 225–serine 228 the chain is on the cytoplasmic side. The chain crosses the membrane as a helical span at residues phenylalanine 229–phenylalanine 249. At valine 250–asparagine 263 the chain is on the lumenal, vesicle side. The chain crosses the membrane as a helical span at residues isoleucine 264–leucine 284. Residues proline 285–histidine 305 lie on the Cytoplasmic side of the membrane. Residues isoleucine 306–leucine 326 traverse the membrane as a helical segment. Topologically, residues threonine 327 to lysine 341 are lumenal, vesicle. An N-linked (GlcNAc...) asparagine glycan is attached at asparagine 337. Residues isoleucine 342 to alanine 362 traverse the membrane as a helical segment. Topologically, residues alanine 363–arginine 398 are cytoplasmic. Residues isoleucine 399–methionine 419 form a helical membrane-spanning segment. Topologically, residues glycine 420–leucine 421 are lumenal, vesicle. A helical membrane pass occupies residues valine 422 to isoleucine 442. Over lysine 443–glycine 457 the chain is Cytoplasmic. The helical transmembrane segment at isoleucine 458 to leucine 478 threads the bilayer. The Lumenal, vesicle portion of the chain corresponds to arginine 479–serine 486.

This sequence belongs to the amino acid/polyamine transporter 2 family.

It localises to the cytoplasmic vesicle membrane. In terms of biological role, involved in the uptake of GABA into the synaptic vesicles. The chain is Vesicular GABA transporter (unc-47) from Caenorhabditis elegans.